A 293-amino-acid chain; its full sequence is Undecaprenyl-diphosphatase (293 aa).

8 consecutive transmembrane segments (helical) span residues 3–23 (IALALKAVILGIVEGLTEFLP), 43–63 (KGKIFEIVIQFGAILAVCWEF), 85–105 (ANVVIASVPAIVLAFIFGKWI), 109–129 (LFNPISVALAFIVGGVVILLA), 178–198 (FALVPGTSRSGATIIGGMLFG), 203–223 (VATEFSFFLAIPVIFGATVYE), 238–258 (IFAVGFVFAFLSAFLCVRWLL), and 269–289 (FAWYRIAFGIVVLLTAYSGLV).

It belongs to the UppP family.

It is found in the cell inner membrane. The enzyme catalyses di-trans,octa-cis-undecaprenyl diphosphate + H2O = di-trans,octa-cis-undecaprenyl phosphate + phosphate + H(+). Functionally, catalyzes the dephosphorylation of undecaprenyl diphosphate (UPP). Confers resistance to bacitracin. In Cupriavidus necator (strain ATCC 17699 / DSM 428 / KCTC 22496 / NCIMB 10442 / H16 / Stanier 337) (Ralstonia eutropha), this protein is Undecaprenyl-diphosphatase.